The sequence spans 597 residues: Elongation factor 4 (597 aa).

The tr-type G domain maps to 2-184 (KNIRNFSIIA…EIVHKIPAPE (183 aa)). GTP-binding positions include 14-19 (DHGKST) and 131-134 (NKID).

Belongs to the TRAFAC class translation factor GTPase superfamily. Classic translation factor GTPase family. LepA subfamily.

It is found in the cell inner membrane. It carries out the reaction GTP + H2O = GDP + phosphate + H(+). Required for accurate and efficient protein synthesis under certain stress conditions. May act as a fidelity factor of the translation reaction, by catalyzing a one-codon backward translocation of tRNAs on improperly translocated ribosomes. Back-translocation proceeds from a post-translocation (POST) complex to a pre-translocation (PRE) complex, thus giving elongation factor G a second chance to translocate the tRNAs correctly. Binds to ribosomes in a GTP-dependent manner. This Actinobacillus succinogenes (strain ATCC 55618 / DSM 22257 / CCUG 43843 / 130Z) protein is Elongation factor 4.